A 124-amino-acid polypeptide reads, in one-letter code: Glutaredoxin-2 (124 aa).

The cysteines at positions 13 and 16 are disulfide-linked.

This sequence belongs to the glutaredoxin family. As to quaternary structure, homodimer.

The protein localises to the host cytoplasm. Glutaredoxin necessary for virion morphogenesis and virus replication. Functions as a thiol-disulfide transfer protein between membrane-associated OPG128 and substrates OPG095 or OPG053. The complete pathway for formation of disulfide bonds in intracellular virion membrane proteins sequentially involves oxidation of OPG072, OPG128 and OPG088. Exhibit thioltransferase and dehydroascorbate reductase activities in vitro. This is Glutaredoxin-2 (OPG088) from Homo sapiens (Human).